A 391-amino-acid chain; its full sequence is S-adenosylmethionine synthase (391 aa).

Residue histidine 19 coordinates ATP. Aspartate 21 is a binding site for Mg(2+). Glutamate 47 provides a ligand contact to K(+). Glutamate 60 and glutamine 103 together coordinate L-methionine. The interval 103-113 (QSADIAQGVDR) is flexible loop. ATP is bound by residues 168–170 (DGK), 236–237 (RF), aspartate 245, 251–252 (RK), alanine 268, and lysine 272. Aspartate 245 serves as a coordination point for L-methionine. L-methionine is bound at residue lysine 276.

The protein belongs to the AdoMet synthase family. Homotetramer; dimer of dimers. Mg(2+) is required as a cofactor. It depends on K(+) as a cofactor.

It is found in the cytoplasm. It carries out the reaction L-methionine + ATP + H2O = S-adenosyl-L-methionine + phosphate + diphosphate. It functions in the pathway amino-acid biosynthesis; S-adenosyl-L-methionine biosynthesis; S-adenosyl-L-methionine from L-methionine: step 1/1. Catalyzes the formation of S-adenosylmethionine (AdoMet) from methionine and ATP. The overall synthetic reaction is composed of two sequential steps, AdoMet formation and the subsequent tripolyphosphate hydrolysis which occurs prior to release of AdoMet from the enzyme. In Nitratidesulfovibrio vulgaris (strain ATCC 29579 / DSM 644 / CCUG 34227 / NCIMB 8303 / VKM B-1760 / Hildenborough) (Desulfovibrio vulgaris), this protein is S-adenosylmethionine synthase.